Reading from the N-terminus, the 177-residue chain is Macro domain-containing protein in non 5'region (177 aa).

The Macro domain occupies 1–177; it reads MSTSVSPVVR…VEFEEVLAMR (177 aa).

It belongs to the MacroD-type family.

This chain is Macro domain-containing protein in non 5'region, found in Streptomyces griseus.